The sequence spans 330 residues: Ketol-acid reductoisomerase (NADP(+)) (330 aa).

The 181-residue stretch at 1-181 (MKVFYDSDFK…GLSRAGVIQT (181 aa)) folds into the KARI N-terminal Rossmann domain. Residues 24-27 (YGSQ), Arg47, Ser52, and 82-85 (DELQ) each bind NADP(+). His107 is a catalytic residue. Gly133 is an NADP(+) binding site. One can recognise a KARI C-terminal knotted domain in the interval 182–327 (TFKEETETDL…AKLRKMCGLE (146 aa)). Residues Asp190, Glu194, Glu226, and Glu230 each contribute to the Mg(2+) site. Ser251 is a substrate binding site.

This sequence belongs to the ketol-acid reductoisomerase family. Requires Mg(2+) as cofactor.

The catalysed reaction is (2R)-2,3-dihydroxy-3-methylbutanoate + NADP(+) = (2S)-2-acetolactate + NADPH + H(+). It catalyses the reaction (2R,3R)-2,3-dihydroxy-3-methylpentanoate + NADP(+) = (S)-2-ethyl-2-hydroxy-3-oxobutanoate + NADPH + H(+). It participates in amino-acid biosynthesis; L-isoleucine biosynthesis; L-isoleucine from 2-oxobutanoate: step 2/4. Its pathway is amino-acid biosynthesis; L-valine biosynthesis; L-valine from pyruvate: step 2/4. Involved in the biosynthesis of branched-chain amino acids (BCAA). Catalyzes an alkyl-migration followed by a ketol-acid reduction of (S)-2-acetolactate (S2AL) to yield (R)-2,3-dihydroxy-isovalerate. In the isomerase reaction, S2AL is rearranged via a Mg-dependent methyl migration to produce 3-hydroxy-3-methyl-2-ketobutyrate (HMKB). In the reductase reaction, this 2-ketoacid undergoes a metal-dependent reduction by NADPH to yield (R)-2,3-dihydroxy-isovalerate. The sequence is that of Ketol-acid reductoisomerase (NADP(+)) from Methanococcus maripaludis (strain DSM 14266 / JCM 13030 / NBRC 101832 / S2 / LL).